Here is a 382-residue protein sequence, read N- to C-terminus: Chaperone protein DnaJ (382 aa).

The region spanning 4–69 (DYYEVLGVSR…DKRRRYDQFG (66 aa)) is the J domain. The CR-type zinc-finger motif lies at 138–219 (GVEKTIKIKK…CYGEGIKQGE (82 aa)). Positions 151, 154, 167, 170, 193, 196, 207, and 210 each coordinate Zn(2+). 4 CXXCXGXG motif repeats span residues 151 to 158 (CKECNGSG), 167 to 174 (CPTCHGAG), 193 to 200 (CPTCGGEG), and 207 to 214 (CPSCYGEG).

This sequence belongs to the DnaJ family. Homodimer. Requires Zn(2+) as cofactor.

The protein resides in the cytoplasm. In terms of biological role, participates actively in the response to hyperosmotic and heat shock by preventing the aggregation of stress-denatured proteins and by disaggregating proteins, also in an autonomous, DnaK-independent fashion. Unfolded proteins bind initially to DnaJ; upon interaction with the DnaJ-bound protein, DnaK hydrolyzes its bound ATP, resulting in the formation of a stable complex. GrpE releases ADP from DnaK; ATP binding to DnaK triggers the release of the substrate protein, thus completing the reaction cycle. Several rounds of ATP-dependent interactions between DnaJ, DnaK and GrpE are required for fully efficient folding. Also involved, together with DnaK and GrpE, in the DNA replication of plasmids through activation of initiation proteins. The sequence is that of Chaperone protein DnaJ from Chlorobium luteolum (strain DSM 273 / BCRC 81028 / 2530) (Pelodictyon luteolum).